The following is a 263-amino-acid chain: uncharacterized protein (263 aa).

It to B.subtilis soj.

This is an uncharacterized protein from Pseudomonas putida (strain ATCC 47054 / DSM 6125 / CFBP 8728 / NCIMB 11950 / KT2440).